A 353-amino-acid chain; its full sequence is Quinolinate synthase (353 aa).

Residues H47 and S68 each contribute to the iminosuccinate site. Residue C113 coordinates [4Fe-4S] cluster. Residues 139–141 (YAN) and S156 each bind iminosuccinate. C200 serves as a coordination point for [4Fe-4S] cluster. Iminosuccinate contacts are provided by residues 226-228 (HPE) and T243. C297 serves as a coordination point for [4Fe-4S] cluster.

Belongs to the quinolinate synthase family. Type 1 subfamily. It depends on [4Fe-4S] cluster as a cofactor.

It localises to the cytoplasm. It catalyses the reaction iminosuccinate + dihydroxyacetone phosphate = quinolinate + phosphate + 2 H2O + H(+). It functions in the pathway cofactor biosynthesis; NAD(+) biosynthesis; quinolinate from iminoaspartate: step 1/1. Catalyzes the condensation of iminoaspartate with dihydroxyacetone phosphate to form quinolinate. The polypeptide is Quinolinate synthase (Vibrio campbellii (strain ATCC BAA-1116)).